The primary structure comprises 330 residues: D-lactate dehydrogenase (330 aa).

Residues 155-156 (RI), aspartate 175, 206-207 (MP), asparagine 212, 233-235 (MAR), and aspartate 259 contribute to the NAD(+) site. The active site involves arginine 235. The active site involves glutamate 264. Histidine 296 serves as the catalytic Proton donor.

It belongs to the D-isomer specific 2-hydroxyacid dehydrogenase family.

The enzyme catalyses (R)-lactate + NAD(+) = pyruvate + NADH + H(+). This Streptococcus agalactiae serotype V (strain ATCC BAA-611 / 2603 V/R) protein is D-lactate dehydrogenase (ldhD).